A 239-amino-acid polypeptide reads, in one-letter code: 1-(5-phosphoribosyl)-5-[(5-phosphoribosylamino)methylideneamino] imidazole-4-carboxamide isomerase (239 aa).

Aspartate 8 functions as the Proton acceptor in the catalytic mechanism. Aspartate 129 serves as the catalytic Proton donor.

Belongs to the HisA/HisF family.

It is found in the cytoplasm. The enzyme catalyses 1-(5-phospho-beta-D-ribosyl)-5-[(5-phospho-beta-D-ribosylamino)methylideneamino]imidazole-4-carboxamide = 5-[(5-phospho-1-deoxy-D-ribulos-1-ylimino)methylamino]-1-(5-phospho-beta-D-ribosyl)imidazole-4-carboxamide. It functions in the pathway amino-acid biosynthesis; L-histidine biosynthesis; L-histidine from 5-phospho-alpha-D-ribose 1-diphosphate: step 4/9. This is 1-(5-phosphoribosyl)-5-[(5-phosphoribosylamino)methylideneamino] imidazole-4-carboxamide isomerase from Bacillus cereus (strain AH187).